Reading from the N-terminus, the 470-residue chain is Calmodulin-binding receptor-like cytoplasmic kinase 1 (470 aa).

Disordered stretches follow at residues 1 to 29 (MPMR…SWTD) and 65 to 128 (PTEC…SKSW). The segment covering 65–82 (PTECRSDPGESSTHDRES) has biased composition (basic and acidic residues). 2 stretches are compositionally biased toward polar residues: residues 83 to 98 (TLSG…SFGR) and 108 to 121 (YRFS…PGKD). Residues 147 to 423 (FSSVHQIGEG…MKGIAEKLWA (277 aa)) form the Protein kinase domain. ATP-binding positions include 153–161 (IGEGGFGTV) and Lys175. The tract at residues 162-185 (FKGKLDDGTIVAIKRARKNNYGKS) is caM-binding. Residue Asp273 is the Proton acceptor of the active site. Phosphoserine is present on residues Ser277 and Ser308. At Thr309 the chain carries Phosphothreonine. Tyr322 is subject to Phosphotyrosine.

The protein belongs to the protein kinase superfamily. Ser/Thr protein kinase family. In terms of assembly, interacts with calmodulin (CaM) in a Ca(2+)-dependent manner. Requires Mg(2+) as cofactor. In terms of processing, autophosphorylated.

Its subcellular location is the cytoplasm. The enzyme catalyses L-seryl-[protein] + ATP = O-phospho-L-seryl-[protein] + ADP + H(+). It carries out the reaction L-threonyl-[protein] + ATP = O-phospho-L-threonyl-[protein] + ADP + H(+). Its activity is regulated as follows. Up-regulated by Ca(2+)/CaM. The sequence is that of Calmodulin-binding receptor-like cytoplasmic kinase 1 (CRCK1) from Arabidopsis thaliana (Mouse-ear cress).